A 156-amino-acid polypeptide reads, in one-letter code: 6,7-dimethyl-8-ribityllumazine synthase (156 aa).

5-amino-6-(D-ribitylamino)uracil contacts are provided by residues Phe-23, 57-59 (AFE), and 81-83 (AVI). A (2S)-2-hydroxy-3-oxobutyl phosphate-binding site is contributed by 86–87 (AT). His-89 (proton donor) is an active-site residue. Position 114 (Phe-114) interacts with 5-amino-6-(D-ribitylamino)uracil. Arg-128 lines the (2S)-2-hydroxy-3-oxobutyl phosphate pocket.

The protein belongs to the DMRL synthase family.

The catalysed reaction is (2S)-2-hydroxy-3-oxobutyl phosphate + 5-amino-6-(D-ribitylamino)uracil = 6,7-dimethyl-8-(1-D-ribityl)lumazine + phosphate + 2 H2O + H(+). It participates in cofactor biosynthesis; riboflavin biosynthesis; riboflavin from 2-hydroxy-3-oxobutyl phosphate and 5-amino-6-(D-ribitylamino)uracil: step 1/2. Functionally, catalyzes the formation of 6,7-dimethyl-8-ribityllumazine by condensation of 5-amino-6-(D-ribitylamino)uracil with 3,4-dihydroxy-2-butanone 4-phosphate. This is the penultimate step in the biosynthesis of riboflavin. In Sulfurovum sp. (strain NBC37-1), this protein is 6,7-dimethyl-8-ribityllumazine synthase.